Consider the following 275-residue polypeptide: NH(3)-dependent NAD(+) synthetase (275 aa).

An ATP-binding site is contributed by 46 to 53 (GISGGQDS). A Mg(2+)-binding site is contributed by Asp52. Arg140 serves as a coordination point for deamido-NAD(+). Position 160 (Thr160) interacts with ATP. A Mg(2+)-binding site is contributed by Glu165. Deamido-NAD(+) is bound by residues Lys173 and Asp180. Positions 189 and 211 each coordinate ATP. 260-261 (HK) contacts deamido-NAD(+).

This sequence belongs to the NAD synthetase family. In terms of assembly, homodimer.

The catalysed reaction is deamido-NAD(+) + NH4(+) + ATP = AMP + diphosphate + NAD(+) + H(+). The protein operates within cofactor biosynthesis; NAD(+) biosynthesis; NAD(+) from deamido-NAD(+) (ammonia route): step 1/1. In terms of biological role, catalyzes the ATP-dependent amidation of deamido-NAD to form NAD. Uses ammonia as a nitrogen source. The chain is NH(3)-dependent NAD(+) synthetase from Enterobacter sp. (strain 638).